The sequence spans 218 residues: Uracil-DNA glycosylase (218 aa).

Catalysis depends on Asp-68, which acts as the Proton acceptor.

Belongs to the uracil-DNA glycosylase (UDG) superfamily. UNG family. As to quaternary structure, homodimer. Interacts with protein OPG148. Component of the Uracil-DNA glycosylase(UDG)-OPG148-polymerase complex; OPG148 and UDG form a heterodimeric processivity factor that associates with OPG71 to form the processive polymerase holoenzyme.

It carries out the reaction Hydrolyzes single-stranded DNA or mismatched double-stranded DNA and polynucleotides, releasing free uracil.. Plays an essential role in viral replication as a component of the DNA polymerase processivity factor. Excises uracil residues from the DNA which can arise as a result of misincorporation of dUMP residues by DNA polymerase or due to deamination of cytosine. The protein is Uracil-DNA glycosylase (OPG116) of Bos taurus (Bovine).